Consider the following 465-residue polypeptide: Probable tRNA modification GTPase MnmE (465 aa).

Residues Arg23, Glu85, and Arg124 each contribute to the (6S)-5-formyl-5,6,7,8-tetrahydrofolate site. The TrmE-type G domain occupies 221 to 384 (GTKVCIIGKP…LNNCILDLSS (164 aa)). Residues 231-236 (NVGKSS), 250-256 (TNFPGTT), and 275-278 (DTAG) contribute to the GTP site. 2 residues coordinate Mg(2+): Ser235 and Thr256. Residue Lys465 coordinates (6S)-5-formyl-5,6,7,8-tetrahydrofolate.

It belongs to the TRAFAC class TrmE-Era-EngA-EngB-Septin-like GTPase superfamily. TrmE GTPase family. K(+) is required as a cofactor.

The protein resides in the plastid. It localises to the chloroplast. In terms of biological role, exhibits a very high intrinsic GTPase hydrolysis rate. Involved in the addition of a carboxymethylaminomethyl (cmnm) group at the wobble position (U34) of certain tRNAs, forming tRNA-cmnm(5)s(2)U34. The sequence is that of Probable tRNA modification GTPase MnmE from Cyanidium caldarium (Red alga).